Here is a 205-residue protein sequence, read N- to C-terminus: Large ribosomal subunit protein uL4 (205 aa).

A disordered region spans residues 43–95 (RSGNRAQKDRAEVKHSTKKPWRQKGTGRARAGMTSSPLWRGGGRAFPNSPEEN). Basic and acidic residues predominate over residues 48 to 57 (AQKDRAEVKH). Over residues 58–69 (STKKPWRQKGTG) the composition is skewed to basic residues.

This sequence belongs to the universal ribosomal protein uL4 family. Part of the 50S ribosomal subunit.

In terms of biological role, one of the primary rRNA binding proteins, this protein initially binds near the 5'-end of the 23S rRNA. It is important during the early stages of 50S assembly. It makes multiple contacts with different domains of the 23S rRNA in the assembled 50S subunit and ribosome. Functionally, forms part of the polypeptide exit tunnel. The protein is Large ribosomal subunit protein uL4 of Bordetella pertussis (strain Tohama I / ATCC BAA-589 / NCTC 13251).